Reading from the N-terminus, the 79-residue chain is Acyl carrier protein (79 aa).

Positions 6–79 constitute a Carrier domain; sequence KEILDGLAEI…VQDVINYIQK (74 aa). Residue S41 is modified to O-(pantetheine 4'-phosphoryl)serine.

It belongs to the acyl carrier protein (ACP) family. Post-translationally, 4'-phosphopantetheine is transferred from CoA to a specific serine of apo-ACP by AcpS. This modification is essential for activity because fatty acids are bound in thioester linkage to the sulfhydryl of the prosthetic group.

Its subcellular location is the cytoplasm. Its pathway is lipid metabolism; fatty acid biosynthesis. Its function is as follows. Carrier of the growing fatty acid chain in fatty acid biosynthesis. The chain is Acyl carrier protein from Thermobifida fusca (strain YX).